The primary structure comprises 255 residues: 5'-nucleotidase SurE (255 aa).

Asp8, Asp9, Ser40, and Asn93 together coordinate a divalent metal cation.

This sequence belongs to the SurE nucleotidase family. The cofactor is a divalent metal cation.

The protein localises to the cytoplasm. It carries out the reaction a ribonucleoside 5'-phosphate + H2O = a ribonucleoside + phosphate. Functionally, nucleotidase that shows phosphatase activity on nucleoside 5'-monophosphates. The chain is 5'-nucleotidase SurE from Nitrobacter winogradskyi (strain ATCC 25391 / DSM 10237 / CIP 104748 / NCIMB 11846 / Nb-255).